The chain runs to 262 residues: Snake venom serine proteinase 9 (262 aa).

The N-terminal stretch at 1-18 is a signal peptide; it reads MVLIRVLANLLILQLSYA. Residues 19-24 constitute a propeptide that is removed on maturation; that stretch reads QKSSEL. The Peptidase S1 domain maps to 25 to 253; that stretch reads VIGGDECNID…HLDWIQSIIA (229 aa). Disulfide bonds link C31-C165, C52-C68, C144-C214, C176-C193, and C204-C229. The active-site Charge relay system is H67. An N-linked (GlcNAc...) asparagine glycan is attached at N105. D112 functions as the Charge relay system in the catalytic mechanism. The active-site Charge relay system is S208.

The protein belongs to the peptidase S1 family. Snake venom subfamily. In terms of assembly, monomer. In terms of tissue distribution, expressed by the venom gland.

The protein localises to the secreted. Functionally, snake venom serine protease that may act in the hemostasis system of the prey. The chain is Snake venom serine proteinase 9 from Crotalus adamanteus (Eastern diamondback rattlesnake).